The following is a 115-amino-acid chain: Ribonuclease P protein component (115 aa).

It belongs to the RnpA family. As to quaternary structure, consists of a catalytic RNA component (M1 or rnpB) and a protein subunit.

It catalyses the reaction Endonucleolytic cleavage of RNA, removing 5'-extranucleotides from tRNA precursor.. RNaseP catalyzes the removal of the 5'-leader sequence from pre-tRNA to produce the mature 5'-terminus. It can also cleave other RNA substrates such as 4.5S RNA. The protein component plays an auxiliary but essential role in vivo by binding to the 5'-leader sequence and broadening the substrate specificity of the ribozyme. The polypeptide is Ribonuclease P protein component (Bacillus mycoides (strain KBAB4) (Bacillus weihenstephanensis)).